The chain runs to 528 residues: Inositol-3-phosphate synthase (528 aa).

NAD(+)-binding residues include glycine 66, glycine 67, asparagine 68, asparagine 69, aspartate 140, glutamine 187, arginine 190, threonine 228, alanine 229, asparagine 230, threonine 231, glycine 279, aspartate 304, serine 307, asparagine 338, asparagine 339, aspartate 340, lysine 353, glycine 392, aspartate 393, aspartate 421, and serine 422.

This sequence belongs to the myo-inositol 1-phosphate synthase family. NAD(+) serves as cofactor.

It localises to the cytoplasm. Its subcellular location is the cytosol. The catalysed reaction is D-glucose 6-phosphate = 1D-myo-inositol 3-phosphate. It participates in polyol metabolism; myo-inositol biosynthesis; myo-inositol from D-glucose 6-phosphate: step 1/2. With respect to regulation, activated by ammonium ions. Its function is as follows. Key enzyme in myo-inositol biosynthesis pathway that catalyzes the conversion of glucose 6-phosphate to 1-myo-inositol 1-phosphate in a NAD-dependent manner. Rate-limiting enzyme in the synthesis of all inositol-containing compounds. De novo-synthesized myo-inositol is essential for incorporation into GPI (glycosylphosphatidylinositol) glycolipids in the bloodstream form. The sequence is that of Inositol-3-phosphate synthase from Trypanosoma brucei brucei.